Here is a 158-residue protein sequence, read N- to C-terminus: MSRRHSAVKREVLPDPKFGDVVISRFMNVLMYDGKKSVAESIVYGALDSLKKRGGQNADPVRLFHEALDNVKPAIEVRSRRVGGATYQVPVEVRSERRQALAIRWIIESARKRGEHTMEDRLSNELLDAVNNRGAAVKKREDTHRMAEANKAFSHYRW.

Belongs to the universal ribosomal protein uS7 family. As to quaternary structure, part of the 30S ribosomal subunit. Contacts proteins S9 and S11.

In terms of biological role, one of the primary rRNA binding proteins, it binds directly to 16S rRNA where it nucleates assembly of the head domain of the 30S subunit. Is located at the subunit interface close to the decoding center, probably blocks exit of the E-site tRNA. The sequence is that of Small ribosomal subunit protein uS7 from Acidiphilium cryptum (strain JF-5).